The following is a 353-amino-acid chain: UDP-N-acetylglucosamine--N-acetylmuramyl-(pentapeptide) pyrophosphoryl-undecaprenol N-acetylglucosamine transferase (353 aa).

UDP-N-acetyl-alpha-D-glucosamine contacts are provided by residues 10 to 12, N124, S183, and Q283; that span reads TGG.

It belongs to the glycosyltransferase 28 family. MurG subfamily.

It localises to the cell inner membrane. The enzyme catalyses di-trans,octa-cis-undecaprenyl diphospho-N-acetyl-alpha-D-muramoyl-L-alanyl-D-glutamyl-meso-2,6-diaminopimeloyl-D-alanyl-D-alanine + UDP-N-acetyl-alpha-D-glucosamine = di-trans,octa-cis-undecaprenyl diphospho-[N-acetyl-alpha-D-glucosaminyl-(1-&gt;4)]-N-acetyl-alpha-D-muramoyl-L-alanyl-D-glutamyl-meso-2,6-diaminopimeloyl-D-alanyl-D-alanine + UDP + H(+). The protein operates within cell wall biogenesis; peptidoglycan biosynthesis. Its function is as follows. Cell wall formation. Catalyzes the transfer of a GlcNAc subunit on undecaprenyl-pyrophosphoryl-MurNAc-pentapeptide (lipid intermediate I) to form undecaprenyl-pyrophosphoryl-MurNAc-(pentapeptide)GlcNAc (lipid intermediate II). The sequence is that of UDP-N-acetylglucosamine--N-acetylmuramyl-(pentapeptide) pyrophosphoryl-undecaprenol N-acetylglucosamine transferase from Helicobacter pylori (strain J99 / ATCC 700824) (Campylobacter pylori J99).